The sequence spans 320 residues: o-succinylbenzoate synthase (320 aa).

Residue Lys133 is the Proton donor of the active site. Mg(2+) is bound by residues Asp161, Glu190, and Asp213. Residue Lys235 is the Proton acceptor of the active site.

This sequence belongs to the mandelate racemase/muconate lactonizing enzyme family. MenC type 1 subfamily. Requires a divalent metal cation as cofactor.

It carries out the reaction (1R,6R)-6-hydroxy-2-succinyl-cyclohexa-2,4-diene-1-carboxylate = 2-succinylbenzoate + H2O. The protein operates within quinol/quinone metabolism; 1,4-dihydroxy-2-naphthoate biosynthesis; 1,4-dihydroxy-2-naphthoate from chorismate: step 4/7. It participates in quinol/quinone metabolism; menaquinone biosynthesis. Converts 2-succinyl-6-hydroxy-2,4-cyclohexadiene-1-carboxylate (SHCHC) to 2-succinylbenzoate (OSB). This chain is o-succinylbenzoate synthase, found in Salmonella choleraesuis (strain SC-B67).